The chain runs to 329 residues: SLAM family member 5 (329 aa).

An N-terminal signal peptide occupies residues 1-21; that stretch reads MAQRHLWIWFLCLQTWSEAAG. Topologically, residues 22-221 are extracellular; the sequence is KDADPMVMNG…TPSFHPRHAV (200 aa). The Ig-like V-type domain occupies 26 to 129; sequence PMVMNGILGE…IYYLHIYRRL (104 aa). An Ig-like C2-type domain is found at 132–206; the sequence is PKITQSLISS…SNSSDSVTVQ (75 aa). Asn-147 carries an N-linked (GlcNAc...) asparagine glycan. A disulfide bridge connects residues Cys-152 and Cys-190. The helical transmembrane segment at 222–242 threads the bilayer; it reads LPGGLAVLFLLILIPMLAFLF. Over 243–329 the chain is Cytoplasmic; that stretch reads RLYKRRRDRI…PKALGNEIVV (87 aa). The short motif at 263 to 268 is the ITSM 1 element; that stretch reads TVYAVV. At Tyr-265 the chain carries Phosphotyrosine. The residue at position 280 (Tyr-280) is a Phosphotyrosine; by LYN. The short motif at 298–303 is the ITSM 2 element; it reads TIYSSV. At Tyr-300 the chain carries Phosphotyrosine.

Homodimer; via its extracellular domain. Forms a head to tail dimer with a CD48 molecule from another cell. Interacts with SH2 domain-containing proteins SH2D1A/SAP and SH2D1B/EAT-2. Interacts with tyrosine-protein phosphatases PTPN6/SHP-1 and PTPN11/SHP-2 via its phosphorylated cytoplasmic domain, and this interaction is blocked by SH2D1A. Phosphorylated by tyrosine-protein kinase LCK on tyrosine residues following ligation induced by agonist monoclonal antibody. The association with SH2D1A/SAP is dependent of tyrosine phosphorylation of its cytoplasmic domain. Phosphorylated on Tyr-280 and Tyr-300 following platelet aggregation. Phosphorylated on tyrosine residues upon high affinity immunoglobulin epsilon receptor aggregation in mast cells. In terms of processing, N-glycosylated. In terms of tissue distribution, predominantly expressed in hematopoietic tissues such as lymph node, spleen, thymus, and bone marrow. Detected also in lung.

Its subcellular location is the cell membrane. In terms of biological role, self-ligand receptor of the signaling lymphocytic activation molecule (SLAM) family. SLAM receptors triggered by homo- or heterotypic cell-cell interactions are modulating the activation and differentiation of a wide variety of immune cells and thus are involved in the regulation and interconnection of both innate and adaptive immune response. Activities are controlled by presence or absence of small cytoplasmic adapter proteins, SH2D1A/SAP and/or SH2D1B/EAT-2. Can mediate natural killer (NK) cell cytotoxicity dependent on SH2D1A and SH2D1B. Increases proliferative responses of activated T-cells and SH2D1A/SAP does not seen be required for this process. Homophilic interactions enhance interferon gamma/IFNG secretion in lymphocytes and induce platelet stimulation via a SH2D1A/SAP-dependent pathway. May serve as a marker for hematopoietic progenitor cells. Required for a prolonged T-cell:B-cell contact, optimal T follicular helper function, and germinal center formation. In germinal centers involved in maintaining B cell tolerance and in preventing autoimmunity. In mast cells negatively regulates high affinity immunoglobulin epsilon receptor signaling; independent of SH2D1A and SH2D1B but implicating FES and PTPN6/SHP-1. In macrophages enhances LPS-induced MAPK phosphorylation and NF-kappaB activation and modulates LPS-induced cytokine secretion; involving ITSM 2. Positively regulates macroautophagy in primary dendritic cells via stabilization of IRF8; inhibits TRIM21-mediated proteasomal degradation of IRF8. This chain is SLAM family member 5 (Cd84), found in Mus musculus (Mouse).